The sequence spans 458 residues: Cysteine--tRNA ligase (458 aa).

Zn(2+) is bound at residue Cys29. The 'HIGH' region signature appears at 31-41 (MTVYDLCHLGH). Residues Cys213, His238, and Glu242 each coordinate Zn(2+). Residues 270–274 (KMSKS) carry the 'KMSKS' region motif. Lys273 lines the ATP pocket.

This sequence belongs to the class-I aminoacyl-tRNA synthetase family. As to quaternary structure, monomer. Zn(2+) is required as a cofactor.

It is found in the cytoplasm. It carries out the reaction tRNA(Cys) + L-cysteine + ATP = L-cysteinyl-tRNA(Cys) + AMP + diphosphate. The chain is Cysteine--tRNA ligase from Acidovorax ebreus (strain TPSY) (Diaphorobacter sp. (strain TPSY)).